The sequence spans 101 residues: Small ribosomal subunit protein uS14 (101 aa).

This sequence belongs to the universal ribosomal protein uS14 family. In terms of assembly, part of the 30S ribosomal subunit. Contacts proteins S3 and S10.

Functionally, binds 16S rRNA, required for the assembly of 30S particles and may also be responsible for determining the conformation of the 16S rRNA at the A site. The protein is Small ribosomal subunit protein uS14 of Gluconobacter oxydans (strain 621H) (Gluconobacter suboxydans).